The primary structure comprises 70 residues: DNA-directed RNA polymerase subunit epsilon (70 aa).

It belongs to the RNA polymerase subunit epsilon family. RNAP is composed of a core of 2 alpha, a beta and a beta' subunit. The core is associated with a delta subunit, and at least one of epsilon or omega. When a sigma factor is associated with the core the holoenzyme is formed, which can initiate transcription.

It carries out the reaction RNA(n) + a ribonucleoside 5'-triphosphate = RNA(n+1) + diphosphate. Its function is as follows. A non-essential component of RNA polymerase (RNAP). The protein is DNA-directed RNA polymerase subunit epsilon of Enterococcus faecalis (strain ATCC 700802 / V583).